The following is a 90-amino-acid chain: MAVTYEKTFEIEIINELSASVYNRVLNYVLNHELDTKNTRLLEVNLLNQLEVAQEVDLFQQPFEELQAIHEYWRSMNQYSKQILNKEKVA.

It belongs to the epsilon antitoxin family. In terms of assembly, in the presence of the zeta toxin, forms an inactive PezA(2)PezT(2) heterotetramer.

Its function is as follows. Antitoxin component of a type II toxin-antitoxin (TA) system. Neutralizes the toxic effect of zeta toxin. Part of a postsegregational killing (PSK) system involved in the killing of plasmid-free cells. Continuous synthesis of the epsilon antitoxin is required to counteract the zeta toxin. This Enterococcus faecalis (Streptococcus faecalis) protein is Antitoxin epsilon 1.